The sequence spans 94 residues: MAFNVITFLQLAVFVVILFNINLHSASAGSKGQRASQVSETSITAEFCDTSCTQGTDKTWSGCSGDCFCVHVGNDTEGRCMRWDGDYPSAEEEE.

Residues 1-28 form the signal peptide; that stretch reads MAFNVITFLQLAVFVVILFNINLHSASA. 3 disulfides stabilise this stretch: Cys-48-Cys-67, Cys-52-Cys-69, and Cys-63-Cys-80. An N-linked (GlcNAc...) asparagine glycan is attached at Asn-74.

The protein localises to the secreted. In terms of biological role, salivary chemokine-binding protein which binds to host chemokines CXCL1, CXCL2, CXCL3, CXCL5, CXCL6, CXCL10, CXCL12 and CXCL13. The protein is Evasin P1086 of Ixodes ricinus (Common tick).